A 185-amino-acid chain; its full sequence is Large ribosomal subunit protein bL25 (185 aa).

Belongs to the bacterial ribosomal protein bL25 family. CTC subfamily. Part of the 50S ribosomal subunit; part of the 5S rRNA/L5/L18/L25 subcomplex. Contacts the 5S rRNA. Binds to the 5S rRNA independently of L5 and L18.

Functionally, this is one of the proteins that binds to the 5S RNA in the ribosome where it forms part of the central protuberance. The polypeptide is Large ribosomal subunit protein bL25 (Chlamydia pneumoniae (Chlamydophila pneumoniae)).